Consider the following 190-residue polypeptide: Transcription termination/antitermination protein NusG (190 aa).

The region spanning 141–165 (GDMVRVTSGPFADFSGVVSEVNAPQ) is the KOW domain.

It belongs to the NusG family.

Functionally, participates in transcription elongation, termination and antitermination. The sequence is that of Transcription termination/antitermination protein NusG from Deinococcus radiodurans (strain ATCC 13939 / DSM 20539 / JCM 16871 / CCUG 27074 / LMG 4051 / NBRC 15346 / NCIMB 9279 / VKM B-1422 / R1).